The sequence spans 316 residues: MEVIKITPRGYCYGVVDAMVIARNAALDPSLPRPIYILGMIVHNKHVTDAFAEEGIITLDGENRLEILEKIERGTVIFTAHGVSPEVKKRALEKGLVTIDATCPDVTKTHRLIEQKLADGYDIIYIGKKGHPEPEGAVGINPERIHLVETPDDVERLSLKNERLMVTNQTTMSQWDVADIMAKVKEKYPHVEMHKEICLATQLRQEAVAEQAKEADVTIVVGDPRSNNSNRLAQVSEEIAGTKAYRIADVTEIDINWIKNAKKVAVTAGASTPTPITKEVIDFLEQFDPNDPATWERERKVPLQKILPKVKTKKEE.

Cys-12 lines the [4Fe-4S] cluster pocket. (2E)-4-hydroxy-3-methylbut-2-enyl diphosphate contacts are provided by His-43 and His-81. Dimethylallyl diphosphate-binding residues include His-43 and His-81. Isopentenyl diphosphate-binding residues include His-43 and His-81. Cys-103 lines the [4Fe-4S] cluster pocket. (2E)-4-hydroxy-3-methylbut-2-enyl diphosphate is bound at residue His-131. Residue His-131 participates in dimethylallyl diphosphate binding. Isopentenyl diphosphate is bound at residue His-131. Residue Glu-133 is the Proton donor of the active site. Thr-170 provides a ligand contact to (2E)-4-hydroxy-3-methylbut-2-enyl diphosphate. Residue Cys-198 coordinates [4Fe-4S] cluster. The (2E)-4-hydroxy-3-methylbut-2-enyl diphosphate site is built by Ser-226, Asn-228, and Ser-271. 3 residues coordinate dimethylallyl diphosphate: Ser-226, Asn-228, and Ser-271. The isopentenyl diphosphate site is built by Ser-226, Asn-228, and Ser-271.

Belongs to the IspH family. [4Fe-4S] cluster is required as a cofactor.

The catalysed reaction is isopentenyl diphosphate + 2 oxidized [2Fe-2S]-[ferredoxin] + H2O = (2E)-4-hydroxy-3-methylbut-2-enyl diphosphate + 2 reduced [2Fe-2S]-[ferredoxin] + 2 H(+). It catalyses the reaction dimethylallyl diphosphate + 2 oxidized [2Fe-2S]-[ferredoxin] + H2O = (2E)-4-hydroxy-3-methylbut-2-enyl diphosphate + 2 reduced [2Fe-2S]-[ferredoxin] + 2 H(+). The protein operates within isoprenoid biosynthesis; dimethylallyl diphosphate biosynthesis; dimethylallyl diphosphate from (2E)-4-hydroxy-3-methylbutenyl diphosphate: step 1/1. Its pathway is isoprenoid biosynthesis; isopentenyl diphosphate biosynthesis via DXP pathway; isopentenyl diphosphate from 1-deoxy-D-xylulose 5-phosphate: step 6/6. Its function is as follows. Catalyzes the conversion of 1-hydroxy-2-methyl-2-(E)-butenyl 4-diphosphate (HMBPP) into a mixture of isopentenyl diphosphate (IPP) and dimethylallyl diphosphate (DMAPP). Acts in the terminal step of the DOXP/MEP pathway for isoprenoid precursor biosynthesis. In Geobacillus thermodenitrificans (strain NG80-2), this protein is 4-hydroxy-3-methylbut-2-enyl diphosphate reductase.